We begin with the raw amino-acid sequence, 278 residues long: MGKEKWCYINSGQCSPAFNMALDECLLNWQSEKKMPPTIRFYEWEVPTLTVGYFQRVEKDINMDVVNEKKYGFVRRQTGGRGVLHDKELTYSVIVSEDHPNMPKTVTEAYRVISQGLLDGFKALGLEAYYAVPKTEADRENLKNPRSGVCFDAPSWYEIVVEGRKIAGSAQTRQKGVILQHGSIPLEIDLDELYDLFLFPNERVKERMKSMFSSKAVAINELTDRTFTIEQLIKAFEVGFEKGLDVELVPYELTEEQLHEVQTLAKEKYESNEWNYKK.

The region spanning 33–248 (KKMPPTIRFY…GFEKGLDVEL (216 aa)) is the BPL/LPL catalytic domain. Residue cysteine 150 is the Acyl-thioester intermediate of the active site.

This sequence belongs to the octanoyltransferase LipM family. Monomer.

The enzyme catalyses octanoyl-[ACP] + L-lysyl-[protein] = N(6)-octanoyl-L-lysyl-[protein] + holo-[ACP] + H(+). The protein operates within protein modification; protein lipoylation via endogenous pathway; protein N(6)-(lipoyl)lysine from octanoyl-[acyl-carrier-protein]. In terms of biological role, catalyzes the transfer of endogenously produced octanoic acid from octanoyl-acyl-carrier-protein onto the lipoyl domain of GcvH, an intermediate carrier during protein lipoylation. The protein is Octanoyltransferase LipM of Bacillus cereus (strain ATCC 14579 / DSM 31 / CCUG 7414 / JCM 2152 / NBRC 15305 / NCIMB 9373 / NCTC 2599 / NRRL B-3711).